Here is a 303-residue protein sequence, read N- to C-terminus: Ribosomal RNA small subunit methyltransferase A (303 aa).

The segment covering 1-19 has biased composition (low complexity); the sequence is MSSRPPASFSATFSAARSS. Residues 1 to 34 form a disordered region; it reads MSSRPPASFSATFSAARSSKCVPPPRRPSTDVSL. S-adenosyl-L-methionine-binding residues include His55, Leu57, Gly82, Glu104, Asp130, and Asn149.

This sequence belongs to the class I-like SAM-binding methyltransferase superfamily. rRNA adenine N(6)-methyltransferase family. RsmA subfamily.

It is found in the cytoplasm. It catalyses the reaction adenosine(1518)/adenosine(1519) in 16S rRNA + 4 S-adenosyl-L-methionine = N(6)-dimethyladenosine(1518)/N(6)-dimethyladenosine(1519) in 16S rRNA + 4 S-adenosyl-L-homocysteine + 4 H(+). Its function is as follows. Specifically dimethylates two adjacent adenosines (A1518 and A1519) in the loop of a conserved hairpin near the 3'-end of 16S rRNA in the 30S particle. May play a critical role in biogenesis of 30S subunits. This Gluconobacter oxydans (strain 621H) (Gluconobacter suboxydans) protein is Ribosomal RNA small subunit methyltransferase A.